A 99-amino-acid polypeptide reads, in one-letter code: DNA-binding protein Fis (99 aa).

Positions Q75 to K94 form a DNA-binding region, H-T-H motif.

This sequence belongs to the transcriptional regulatory Fis family. In terms of assembly, homodimer.

Its function is as follows. Activates ribosomal RNA transcription. Plays a direct role in upstream activation of rRNA promoters. The chain is DNA-binding protein Fis from Buchnera aphidicola subsp. Schizaphis graminum (strain Sg).